The following is a 538-amino-acid chain: Cytochrome P450 52A4 (538 aa).

Residues 27-46 (WYILIPTILLTLNFLSILHT) form a helical membrane-spanning segment. Cys485 serves as a coordination point for heme.

The protein belongs to the cytochrome P450 family. Heme is required as a cofactor.

The protein resides in the membrane. Its function is as follows. Together with an NADPH cytochrome P450 the enzyme system catalyzes the terminal hydroxylation as the first step in the assimilation of alkanes and fatty acids. This Candida maltosa (Yeast) protein is Cytochrome P450 52A4 (CYP52A4).